The sequence spans 309 residues: Ribokinase (309 aa).

Residues 14–16 (NAD), 42–46 (GKGAN), and Glu143 contribute to the substrate site. Residues Asn187 and 223–228 (TLGSRG) each bind ATP. Asp249 and Ile251 together coordinate K(+). ATP is bound by residues 254 to 255 (GD) and His279. Asp255 serves as a coordination point for substrate. Asp255 functions as the Proton acceptor in the catalytic mechanism. Residues Ala285, Arg288, Gly290, and Ser294 each coordinate K(+).

This sequence belongs to the carbohydrate kinase PfkB family. Ribokinase subfamily. In terms of assembly, homodimer. Requires Mg(2+) as cofactor.

It is found in the cytoplasm. It carries out the reaction D-ribose + ATP = D-ribose 5-phosphate + ADP + H(+). The protein operates within carbohydrate metabolism; D-ribose degradation; D-ribose 5-phosphate from beta-D-ribopyranose: step 2/2. With respect to regulation, activated by a monovalent cation that binds near, but not in, the active site. The most likely occupant of the site in vivo is potassium. Ion binding induces a conformational change that may alter substrate affinity. Catalyzes the phosphorylation of ribose at O-5 in a reaction requiring ATP and magnesium. The resulting D-ribose-5-phosphate can then be used either for sythesis of nucleotides, histidine, and tryptophan, or as a component of the pentose phosphate pathway. The sequence is that of Ribokinase from Escherichia coli O157:H7.